The primary structure comprises 440 residues: Trigger factor (440 aa).

One can recognise a PPIase FKBP-type domain in the interval 161–257 (GDYVKLAYEG…VLEVRERVLP (97 aa)).

It belongs to the FKBP-type PPIase family. Tig subfamily.

The protein resides in the cytoplasm. The catalysed reaction is [protein]-peptidylproline (omega=180) = [protein]-peptidylproline (omega=0). Involved in protein export. Acts as a chaperone by maintaining the newly synthesized protein in an open conformation. Functions as a peptidyl-prolyl cis-trans isomerase. This chain is Trigger factor, found in Opitutus terrae (strain DSM 11246 / JCM 15787 / PB90-1).